Reading from the N-terminus, the 135-residue chain is Small ribosomal subunit protein eS6 (135 aa).

The protein belongs to the eukaryotic ribosomal protein eS6 family.

The polypeptide is Small ribosomal subunit protein eS6 (Methanospirillum hungatei JF-1 (strain ATCC 27890 / DSM 864 / NBRC 100397 / JF-1)).